An 812-amino-acid chain; its full sequence is DNA gyrase subunit A (812 aa).

One can recognise a Topo IIA-type catalytic domain in the interval 31–496; the sequence is IPDVRDGLKP…GNTDFNVEDV (466 aa). Tyr119 serves as the catalytic O-(5'-phospho-DNA)-tyrosine intermediate. Residues 523–529 carry the GyrA-box motif; sequence QGRGGKG.

Belongs to the type II topoisomerase GyrA/ParC subunit family. In terms of assembly, heterotetramer, composed of two GyrA and two GyrB chains. In the heterotetramer, GyrA contains the active site tyrosine that forms a transient covalent intermediate with DNA, while GyrB binds cofactors and catalyzes ATP hydrolysis.

Its subcellular location is the cytoplasm. It carries out the reaction ATP-dependent breakage, passage and rejoining of double-stranded DNA.. Its function is as follows. A type II topoisomerase that negatively supercoils closed circular double-stranded (ds) DNA in an ATP-dependent manner to modulate DNA topology and maintain chromosomes in an underwound state. Negative supercoiling favors strand separation, and DNA replication, transcription, recombination and repair, all of which involve strand separation. Also able to catalyze the interconversion of other topological isomers of dsDNA rings, including catenanes and knotted rings. Type II topoisomerases break and join 2 DNA strands simultaneously in an ATP-dependent manner. In Kosmotoga olearia (strain ATCC BAA-1733 / DSM 21960 / TBF 19.5.1), this protein is DNA gyrase subunit A.